The following is a 341-amino-acid chain: Phosphoribosylformylglycinamidine cyclo-ligase (341 aa).

It belongs to the AIR synthase family.

Its subcellular location is the cytoplasm. It catalyses the reaction 2-formamido-N(1)-(5-O-phospho-beta-D-ribosyl)acetamidine + ATP = 5-amino-1-(5-phospho-beta-D-ribosyl)imidazole + ADP + phosphate + H(+). The protein operates within purine metabolism; IMP biosynthesis via de novo pathway; 5-amino-1-(5-phospho-D-ribosyl)imidazole from N(2)-formyl-N(1)-(5-phospho-D-ribosyl)glycinamide: step 2/2. The polypeptide is Phosphoribosylformylglycinamidine cyclo-ligase (Caldicellulosiruptor saccharolyticus (strain ATCC 43494 / DSM 8903 / Tp8T 6331)).